A 161-amino-acid polypeptide reads, in one-letter code: Ribonuclease H (161 aa).

Positions 1–142 (MLKLVKMFSD…CDKIARQSAQ (142 aa)) constitute an RNase H type-1 domain. Positions 10, 48, 70, and 134 each coordinate Mg(2+).

This sequence belongs to the RNase H family. As to quaternary structure, monomer. Requires Mg(2+) as cofactor.

The protein resides in the cytoplasm. The enzyme catalyses Endonucleolytic cleavage to 5'-phosphomonoester.. Functionally, endonuclease that specifically degrades the RNA of RNA-DNA hybrids. The polypeptide is Ribonuclease H (rnhA) (Buchnera aphidicola subsp. Schizaphis graminum (strain Sg)).